Reading from the N-terminus, the 50-residue chain is Photosystem II reaction center protein M (50 aa).

A helical membrane pass occupies residues glycine 7–isoleucine 27.

Belongs to the PsbM family. PSII is composed of 1 copy each of membrane proteins PsbA, PsbB, PsbC, PsbD, PsbE, PsbF, PsbH, PsbI, PsbJ, PsbK, PsbL, PsbM, PsbT, PsbX, PsbY, Psb30/Ycf12, peripheral proteins PsbO, CyanoQ (PsbQ), PsbU, PsbV and a large number of cofactors. It forms dimeric complexes.

Its subcellular location is the cellular thylakoid membrane. In terms of biological role, one of the components of the core complex of photosystem II (PSII). PSII is a light-driven water:plastoquinone oxidoreductase that uses light energy to abstract electrons from H(2)O, generating O(2) and a proton gradient subsequently used for ATP formation. It consists of a core antenna complex that captures photons, and an electron transfer chain that converts photonic excitation into a charge separation. This subunit is found at the monomer-monomer interface. This is Photosystem II reaction center protein M from Prochlorococcus marinus (strain MIT 9301).